The primary structure comprises 728 residues: Lanosterol synthase (728 aa).

The PFTB 1 repeat unit spans residues 117-159 (RVEMIRYIVNTAHPVDGGWGLHSVDKSTCFGTTMNYVCLRLLG). Aspartate 450 (proton donor) is an active-site residue. PFTB repeat units lie at residues 561–602 (ISSA…HTVG) and 611–657 (VKKG…ALIG).

This sequence belongs to the terpene cyclase/mutase family.

It localises to the lipid droplet. Its subcellular location is the endoplasmic reticulum membrane. The enzyme catalyses (S)-2,3-epoxysqualene = lanosterol. It participates in terpene metabolism; lanosterol biosynthesis; lanosterol from farnesyl diphosphate: step 3/3. Its function is as follows. Lanosterol synthase; part of the third module of ergosterol biosynthesis pathway that includes the late steps of the pathway. ERG7 catalyzes the cyclization of (S)-2,3 oxidosqualene to lanosterol, a reaction that forms the sterol core. The third module or late pathway involves the ergosterol synthesis itself through consecutive reactions that mainly occur in the endoplasmic reticulum (ER) membrane. Firstly, the squalene synthase ERG9 catalyzes the condensation of 2 farnesyl pyrophosphate moieties to form squalene, which is the precursor of all steroids. Squalene synthase is crucial for balancing the incorporation of farnesyl diphosphate (FPP) into sterol and nonsterol isoprene synthesis. Secondly, the squalene epoxidase ERG1 catalyzes the stereospecific oxidation of squalene to (S)-2,3-epoxysqualene, which is considered to be a rate-limiting enzyme in steroid biosynthesis. Then, the lanosterol synthase ERG7 catalyzes the cyclization of (S)-2,3 oxidosqualene to lanosterol, a reaction that forms the sterol core. In the next steps, lanosterol is transformed to zymosterol through a complex process involving various demethylation, reduction and desaturation reactions. The lanosterol 14-alpha-demethylase ERG11 (also known as CYP51) catalyzes C14-demethylation of lanosterol to produce 4,4'-dimethyl cholesta-8,14,24-triene-3-beta-ol, which is critical for ergosterol biosynthesis. The C-14 reductase ERG24 reduces the C14=C15 double bond of 4,4-dimethyl-cholesta-8,14,24-trienol to produce 4,4-dimethyl-cholesta-8,24-dienol. 4,4-dimethyl-cholesta-8,24-dienol is substrate of the C-4 demethylation complex ERG25-ERG26-ERG27 in which ERG25 catalyzes the three-step monooxygenation required for the demethylation of 4,4-dimethyl and 4alpha-methylsterols, ERG26 catalyzes the oxidative decarboxylation that results in a reduction of the 3-beta-hydroxy group at the C-3 carbon to an oxo group, and ERG27 is responsible for the reduction of the keto group on the C-3. ERG28 has a role as a scaffold to help anchor ERG25, ERG26 and ERG27 to the endoplasmic reticulum and ERG29 regulates the activity of the iron-containing C4-methylsterol oxidase ERG25. Then, the sterol 24-C-methyltransferase ERG6 catalyzes the methyl transfer from S-adenosyl-methionine to the C-24 of zymosterol to form fecosterol. The C-8 sterol isomerase ERG2 catalyzes the reaction which results in unsaturation at C-7 in the B ring of sterols and thus converts fecosterol to episterol. The sterol-C5-desaturase ERG3 then catalyzes the introduction of a C-5 double bond in the B ring to produce 5-dehydroepisterol. The C-22 sterol desaturase ERG5 further converts 5-dehydroepisterol into ergosta-5,7,22,24(28)-tetraen-3beta-ol by forming the C-22(23) double bond in the sterol side chain. Finally, ergosta-5,7,22,24(28)-tetraen-3beta-ol is substrate of the C-24(28) sterol reductase ERG4 to produce ergosterol. This chain is Lanosterol synthase, found in Candida albicans (strain SC5314 / ATCC MYA-2876) (Yeast).